The following is a 468-amino-acid chain: Pancreatic lipase-related protein 2 (468 aa).

Positions M1–G16 are cleaved as a signal peptide. C20 and C26 are disulfide-bonded. The segment at V92–L104 is required for galactolipase activity. C108 and C119 are oxidised to a cystine. The Nucleophile role is filled by S170. The Charge relay system role is filled by D194. Residues E205, R208, D210, and D213 each contribute to the Ca(2+) site. The cysteines at positions 255 and 279 are disulfide-linked. Residues Q256–A278 are required for galactolipase activity. H281 acts as the Charge relay system in catalysis. 2 disulfide bridges follow: C303-C314 and C317-C322. Residues N352 and N427 are each glycosylated (N-linked (GlcNAc...) asparagine). The 113-residue stretch at W356–C468 folds into the PLAT domain. C452 and C468 are disulfide-bonded.

Belongs to the AB hydrolase superfamily. Lipase family. Expressed in pancreatic acinar cells (at protein level).

It localises to the secreted. It is found in the zymogen granule membrane. The protein localises to the cell projection. The protein resides in the neuron projection. The enzyme catalyses a triacylglycerol + H2O = a diacylglycerol + a fatty acid + H(+). It carries out the reaction a 1,2-diacyl-3-O-(beta-D-galactosyl)-sn-glycerol + 2 H2O = 3-beta-D-galactosyl-sn-glycerol + 2 a fatty acid + 2 H(+). The catalysed reaction is 1,2,3-tri-(9Z-octadecenoyl)-glycerol + H2O = di-(9Z)-octadecenoylglycerol + (9Z)-octadecenoate + H(+). It catalyses the reaction di-(9Z)-octadecenoylglycerol + H2O = (9Z-octadecenoyl)-glycerol + (9Z)-octadecenoate + H(+). The enzyme catalyses (9Z-octadecenoyl)-glycerol + H2O = glycerol + (9Z)-octadecenoate + H(+). It carries out the reaction 1-(9Z-octadecenoyl)-glycerol + H2O = glycerol + (9Z)-octadecenoate + H(+). The catalysed reaction is 1,2,3-tripropanoylglycerol + H2O = dipropanoylglycerol + propanoate + H(+). It catalyses the reaction 1,2,3-tributanoylglycerol + H2O = dibutanoylglycerol + butanoate + H(+). The enzyme catalyses 1,2,3-trioctanoylglycerol + H2O = dioctanoylglycerol + octanoate + H(+). It carries out the reaction 1,2-didecanoylglycerol + H2O = decanoylglycerol + decanoate + H(+). The catalysed reaction is long chain 1,2-diacyl-3-O-beta-D-galactosyl-sn-glycerol + H2O = long chain acyl-3-O-beta-D-galactosyl-sn-glycerol + a fatty acid + H(+). It catalyses the reaction 1,2-dioctanoyl-3-O-beta-D-galactosyl-sn-glycerol + H2O = octanoyl-3-(beta-D-galactosyl)-sn-glycerol + octanoate + H(+). The enzyme catalyses 1,2-didodecanoyl-3-beta-D-galactosyl-sn-glycerol + H2O = dodecanoyl-3-beta-D-galactosyl-sn-glycerol + dodecanoate + H(+). It carries out the reaction 1-beta-D-galactosyl-2,3-didodecanoyl-sn-glycerol + H2O = 1-beta-D-galactosyl-dodecanoyl-sn-glycerol + dodecanoate + H(+). The catalysed reaction is a 1,2-diacyl-3-O-[alpha-D-galactosyl-(1-&gt;6)-beta-D-galactosyl]-sn-glycerol + H2O = acyl-3-O-[alpha-D-galactosyl-(1-&gt;6)-beta-D-galactosyl]-sn-glycerol + a fatty acid + H(+). It catalyses the reaction long chain 1,2-diacyl-3-O-[alpha-D-galactosyl-(1-&gt;6)-beta-D-galactosyl]-sn-glycerol + H2O = long chain acyl-3-O-[alpha-D-galactosyl-(1-&gt;6)-beta-D-galactosyl]-sn-glycerol + a fatty acid + H(+). The enzyme catalyses 1,2-dioctanoyl-3-O-[alpha-D-galactosyl-(1-&gt;6)-beta-D-galactosyl]-sn-glycerol + H2O = octanoyl-3-O-[alpha-D-galactosyl-(1-&gt;6)-beta-D-galactosyl]-sn-glycerol + octanoate + H(+). It carries out the reaction 1,2-didodecanoyl-3-O-[alpha-D-galactosyl-(1-&gt;6)-beta-D-galactosyl]-sn-glycerol + H2O = dodecanoyl-3-O-[alpha-D-galactosyl-(1-&gt;6)-beta-D-galactosyl]-sn-glycerol + dodecanoate + H(+). The catalysed reaction is a 1,2-diacyl-sn-glycero-3-phosphocholine + H2O = a monoacyl-sn-glycero-3-phosphocholine + a fatty acid + H(+). Its pathway is glycerolipid metabolism; triacylglycerol degradation. The protein operates within glycolipid metabolism. Its activity is regulated as follows. CLPS stimulates triacylglycerol lipase activity. Triacylglycerol lipase activity is not inhibited by increasing bile salt concentration. Lipase that primarily hydrolyzes triglycerides and galactosylglycerides. In neonates, may play a major role in pancreatic digestion of dietary fats such as milk fat globules enriched in long-chain triglycerides. Hydrolyzes short-, medium- and long-chain fatty acyls in triglycerides without apparent positional specificity. Can completely deacylate triacylglycerols. When the liver matures and bile salt synthesis increases, likely functions mainly as a galactolipase and monoacylglycerol lipase. Hydrolyzes monogalactosyldiglycerols (MGDG) and digalactosyldiacylglycerols (DGDG) present in a plant-based diet, releasing long-chain polyunsaturated fatty acids. Hydrolyzes medium- and long-chain fatty acyls in galactolipids. May act together with LIPF to hydrolyze partially digested triglycerides. Hydrolyzes long-chain monoglycerides with high efficiency. In cytotoxic T cells, contributes to perforin-dependent cell lysis, but is unlikely to mediate direct cytotoxicity. Also has low phospholipase activity. In neurons, required for the localization of the phospholipid 1-oleoyl-2-palmitoyl-PC (OPPC) to neurite tips through acyl chain remodeling of membrane phospholipids. The resulting OPPC-rich lipid membrane domain recruits the t-SNARE protein STX4 by selectively interacting with the STX4 transmembrane domain and this promotes surface expression of the dopamine transporter SLC6A3/DAT at neurite tips by facilitating fusion of SLC6A3-containing transport vesicles with the plasma membrane. The protein is Pancreatic lipase-related protein 2 of Rattus norvegicus (Rat).